The primary structure comprises 500 residues: Cytochrome P450 monooxygenase hepD (500 aa).

A helical transmembrane segment spans residues 15–35; it reads WILLSLSLAFIVVYSLFYLAV. 4 N-linked (GlcNAc...) asparagine glycosylation sites follow: Asn-99, Asn-185, Asn-373, and Asn-409. Cys-445 serves as a coordination point for heme. A glycan (N-linked (GlcNAc...) asparagine) is linked at Asn-482.

This sequence belongs to the cytochrome P450 family. Heme is required as a cofactor.

It is found in the membrane. The protein operates within secondary metabolite biosynthesis. Its function is as follows. Cytochrome P450 monooxygenase; part of the gene cluster that mediates the biosynthesis of heptelidic acid (HA), a sesquiterpene lactone that acts as an inhibitor of glyceraldehyde-3-phosphatedehydrogenase (GAPDH) and a growth inhibitor of the salt-tolerant lactic acid bacteria in soy sauce brewing. This is Cytochrome P450 monooxygenase hepD from Aspergillus oryzae (strain ATCC 42149 / RIB 40) (Yellow koji mold).